The following is a 311-amino-acid chain: Ferrochelatase (311 aa).

Fe cation-binding residues include His-179 and Glu-260.

This sequence belongs to the ferrochelatase family.

It is found in the cytoplasm. It catalyses the reaction heme b + 2 H(+) = protoporphyrin IX + Fe(2+). The protein operates within porphyrin-containing compound metabolism; protoheme biosynthesis; protoheme from protoporphyrin-IX: step 1/1. In terms of biological role, catalyzes the ferrous insertion into protoporphyrin IX. This chain is Ferrochelatase, found in Helicobacter hepaticus (strain ATCC 51449 / 3B1).